The following is a 242-amino-acid chain: Mannose-P-dolichol utilization defect 1 protein homolog (242 aa).

Positions 37–95 constitute a PQ-loop 1 domain; that stretch reads LSRGLGFAITLGSILLFVPQILKIQAARSAQGISAASQLLALVGAIGTASYSYRSGFVF. Transmembrane regions (helical) follow at residues 40–60, 68–88, 98–118, 120–140, 148–168, 180–200, and 207–227; these read GLGF…ILKI, GISA…ASYS, WGDS…IFLF, GQTM…YGVV, TLTA…LLQI, LSLI…FTSV, and LLIV…AQFF. Residues 152-202 enclose the PQ-loop 2 domain; the sequence is VQTAGIPIVVVSKLLQISQNYRAQSTGQLSLISVFLQFAGTLARVFTSVQD.

It belongs to the MPDU1 (TC 2.A.43.3) family.

It is found in the membrane. The sequence is that of Mannose-P-dolichol utilization defect 1 protein homolog from Caenorhabditis elegans.